The sequence spans 204 residues: Tetraspanin-13 (204 aa).

At 1 to 19 (MVCGGFSCSKNCLCALNLL) the chain is on the cytoplasmic side. A helical transmembrane segment spans residues 20-40 (YTLVSLLLIGIAAWGIGFGLI). The Extracellular segment spans residues 41 to 44 (SSLR). A helical membrane pass occupies residues 45–65 (VVGVVIAVGIFLFLIALVGLI). Residues 66–72 (GAVKHHQ) lie on the Cytoplasmic side of the membrane. The chain crosses the membrane as a helical span at residues 73-93 (VLLFFYMIILLLVFIVQFSVS). The Extracellular portion of the chain corresponds to 94 to 167 (CACLALNREQ…IGEYAGEVLR (74 aa)). N-linked (GlcNAc...) asparagine glycans are attached at residues asparagine 113 and asparagine 137. Phosphoserine is present on serine 143. The chain crosses the membrane as a helical span at residues 168–188 (FVGGIGLFFSFTEILGVWLTY). Over 189-204 (RYRNQKDPRANPSAFL) the chain is Cytoplasmic.

This sequence belongs to the tetraspanin (TM4SF) family.

The protein resides in the membrane. This chain is Tetraspanin-13 (Tspan13), found in Mus musculus (Mouse).